A 662-amino-acid polypeptide reads, in one-letter code: Translation factor GUF1, mitochondrial (662 aa).

A mitochondrion-targeting transit peptide spans 1 to 28 (MYIHSSRTVLARYGSRTPLLRPSVLGRY). A tr-type G domain is found at 62 to 244 (ENYRNFSIVA…AIVDHIPAPD (183 aa)). GTP contacts are provided by residues 71 to 78 (AHVDHGKS), 137 to 141 (DTPGH), and 191 to 194 (NKID).

The protein belongs to the TRAFAC class translation factor GTPase superfamily. Classic translation factor GTPase family. LepA subfamily.

The protein localises to the mitochondrion inner membrane. It carries out the reaction GTP + H2O = GDP + phosphate + H(+). Promotes mitochondrial protein synthesis. May act as a fidelity factor of the translation reaction, by catalyzing a one-codon backward translocation of tRNAs on improperly translocated ribosomes. Binds to mitochondrial ribosomes in a GTP-dependent manner. The polypeptide is Translation factor GUF1, mitochondrial (Meyerozyma guilliermondii (strain ATCC 6260 / CBS 566 / DSM 6381 / JCM 1539 / NBRC 10279 / NRRL Y-324) (Yeast)).